The primary structure comprises 147 residues: Small ribosomal subunit protein uS12 (147 aa).

The protein belongs to the universal ribosomal protein uS12 family. Part of the 30S ribosomal subunit.

In terms of biological role, with S4 and S5 plays an important role in translational accuracy. Located at the interface of the 30S and 50S subunits. The chain is Small ribosomal subunit protein uS12 from Methanococcus aeolicus (strain ATCC BAA-1280 / DSM 17508 / OCM 812 / Nankai-3).